A 702-amino-acid chain; its full sequence is Phosphoglycerol transferase I (702 aa).

The next 3 helical transmembrane spans lie at 2–22 (HWIL…SPRL), 71–91 (FSGY…PLML), and 103–123 (GGAV…VSPV).

It belongs to the OpgB family.

Its subcellular location is the cell inner membrane. The catalysed reaction is a phosphatidylglycerol + a membrane-derived-oligosaccharide D-glucose = a 1,2-diacyl-sn-glycerol + a membrane-derived-oligosaccharide 6-(glycerophospho)-D-glucose.. Its pathway is glycan metabolism; osmoregulated periplasmic glucan (OPG) biosynthesis. In terms of biological role, transfers a phosphoglycerol residue from phosphatidylglycerol to the membrane-bound nascent glucan backbones. This is Phosphoglycerol transferase I from Xanthomonas campestris pv. campestris (strain B100).